The chain runs to 569 residues: Sulfite reductase [NADPH] hemoprotein beta-component (569 aa).

[4Fe-4S] cluster-binding residues include Cys-434, Cys-440, Cys-479, and Cys-483. Siroheme is bound at residue Cys-483.

Belongs to the nitrite and sulfite reductase 4Fe-4S domain family. Alpha(8)-beta(8). The alpha component is a flavoprotein, the beta component is a hemoprotein. Siroheme is required as a cofactor. It depends on [4Fe-4S] cluster as a cofactor.

It carries out the reaction hydrogen sulfide + 3 NADP(+) + 3 H2O = sulfite + 3 NADPH + 4 H(+). Its pathway is sulfur metabolism; hydrogen sulfide biosynthesis; hydrogen sulfide from sulfite (NADPH route): step 1/1. Component of the sulfite reductase complex that catalyzes the 6-electron reduction of sulfite to sulfide. This is one of several activities required for the biosynthesis of L-cysteine from sulfate. This chain is Sulfite reductase [NADPH] hemoprotein beta-component, found in Staphylococcus saprophyticus subsp. saprophyticus (strain ATCC 15305 / DSM 20229 / NCIMB 8711 / NCTC 7292 / S-41).